Consider the following 504-residue polypeptide: Occludin (504 aa).

Residues M1–R57 are Cytoplasmic-facing. The MARVEL domain maps to S51–S253. A helical transmembrane segment spans residues G58–W80. Topologically, residues D81–R123 are extracellular. A helical membrane pass occupies residues T124 to L148. The Cytoplasmic segment spans residues S149 to R158. Residues F159–M183 form a helical membrane-spanning segment. At G184–E227 the chain is on the extracellular side. Residues C204 and C221 are joined by a disulfide bond. The chain crosses the membrane as a helical span at residues A228–Q249. The Cytoplasmic portion of the chain corresponds to K250–G504. The segment at P324–E396 is disordered. Basic residues predominate over residues P361–R370. Y379 and Y383 each carry phosphotyrosine. Residues Y379–T385 are interaction with TJP1. Residues E396–G504 enclose the OCEL domain. A coiled-coil region spans residues Q412 to R471.

This sequence belongs to the ELL/occludin family. In terms of assembly, interacts with TJP1 and TJP3. Post-translationally, phosphorylated. As to expression, localized at tight junctions of both epithelial and endothelial cells. Highly expressed in lung and liver. Expressed at a lower level in brain.

The protein localises to the cell membrane. It is found in the cell junction. It localises to the tight junction. Its function is as follows. May play a role in the formation and regulation of the tight junction (TJ) paracellular permeability barrier. Interacts with ZO-1. This is Occludin (OCLN) from Gallus gallus (Chicken).